Here is a 184-residue protein sequence, read N- to C-terminus: Large ribosomal subunit protein uL15 (184 aa).

A disordered region spans residues 1–62 (MDLSSLRPAK…QMPMYRRLPK (62 aa)). Positions 21 to 35 (RGPGSGNGTTAGKGN) are enriched in gly residues.

The protein belongs to the universal ribosomal protein uL15 family. In terms of assembly, part of the 50S ribosomal subunit.

Its function is as follows. Binds to the 23S rRNA. The protein is Large ribosomal subunit protein uL15 of Chlorobaculum parvum (strain DSM 263 / NCIMB 8327) (Chlorobium vibrioforme subsp. thiosulfatophilum).